The primary structure comprises 119 residues: Large ribosomal subunit protein bL19 (119 aa).

Belongs to the bacterial ribosomal protein bL19 family.

In terms of biological role, this protein is located at the 30S-50S ribosomal subunit interface and may play a role in the structure and function of the aminoacyl-tRNA binding site. In Pediococcus pentosaceus (strain ATCC 25745 / CCUG 21536 / LMG 10740 / 183-1w), this protein is Large ribosomal subunit protein bL19.